Here is a 351-residue protein sequence, read N- to C-terminus: Carbamoyl phosphate synthase small chain (351 aa).

The tract at residues 1–171 (MKGIIYLEDG…IIHIAGNGNK (171 aa)) is CPSase. 3 residues coordinate L-glutamine: S45, G219, and G221. One can recognise a Glutamine amidotransferase type-1 domain in the interval 171–351 (KVAVMDFGIK…TYLFDQFVNL (181 aa)). Residue C246 is the Nucleophile of the active site. L247, Q250, N288, G290, and Y291 together coordinate L-glutamine. Residues H331 and E333 contribute to the active site.

This sequence belongs to the CarA family. As to quaternary structure, composed of two chains; the small (or glutamine) chain promotes the hydrolysis of glutamine to ammonia, which is used by the large (or ammonia) chain to synthesize carbamoyl phosphate. Tetramer of heterodimers (alpha,beta)4.

It catalyses the reaction hydrogencarbonate + L-glutamine + 2 ATP + H2O = carbamoyl phosphate + L-glutamate + 2 ADP + phosphate + 2 H(+). The enzyme catalyses L-glutamine + H2O = L-glutamate + NH4(+). The protein operates within amino-acid biosynthesis; L-arginine biosynthesis; carbamoyl phosphate from bicarbonate: step 1/1. It functions in the pathway pyrimidine metabolism; UMP biosynthesis via de novo pathway; (S)-dihydroorotate from bicarbonate: step 1/3. In terms of biological role, small subunit of the glutamine-dependent carbamoyl phosphate synthetase (CPSase). CPSase catalyzes the formation of carbamoyl phosphate from the ammonia moiety of glutamine, carbonate, and phosphate donated by ATP, constituting the first step of 2 biosynthetic pathways, one leading to arginine and/or urea and the other to pyrimidine nucleotides. The small subunit (glutamine amidotransferase) binds and cleaves glutamine to supply the large subunit with the substrate ammonia. The chain is Carbamoyl phosphate synthase small chain from Clostridium acetobutylicum (strain ATCC 824 / DSM 792 / JCM 1419 / IAM 19013 / LMG 5710 / NBRC 13948 / NRRL B-527 / VKM B-1787 / 2291 / W).